Reading from the N-terminus, the 115-residue chain is Glycine cleavage system H-like protein (115 aa).

The 83-residue stretch at 17–99 (VVRLGLTEKM…EGEGWLAVVR (83 aa)) folds into the Lipoyl-binding domain. Lys-58 bears the N6-lipoyllysine mark.

Belongs to the GcvH family. It depends on (R)-lipoate as a cofactor.

In Chlamydia pneumoniae (Chlamydophila pneumoniae), this protein is Glycine cleavage system H-like protein.